Reading from the N-terminus, the 227-residue chain is Type II restriction enzyme HhaII (227 aa).

Homodimer.

It catalyses the reaction Endonucleolytic cleavage of DNA to give specific double-stranded fragments with terminal 5'-phosphates.. In terms of biological role, a P subtype restriction enzyme that recognizes the double-stranded sequence 5'-GANTC-3' and cleaves after G-1. This chain is Type II restriction enzyme HhaII (hhaIIR), found in Haemophilus parahaemolyticus.